Here is a 316-residue protein sequence, read N- to C-terminus: Carbamate kinase-like protein YahI (316 aa).

Belongs to the carbamate kinase family.

The polypeptide is Carbamate kinase-like protein YahI (yahI) (Escherichia coli (strain K12)).